A 199-amino-acid polypeptide reads, in one-letter code: Superoxide dismutase [Fe] (199 aa).

The Fe cation site is built by His27, His74, Asp158, and His162.

The protein belongs to the iron/manganese superoxide dismutase family. Homodimer. Fe cation is required as a cofactor.

It catalyses the reaction 2 superoxide + 2 H(+) = H2O2 + O2. Functionally, destroys superoxide anion radicals which are normally produced within the cells and which are toxic to biological systems. The sequence is that of Superoxide dismutase [Fe] (SODB) from Babesia bovis.